We begin with the raw amino-acid sequence, 197 residues long: dITP/XTP pyrophosphatase (197 aa).

Residue 7–12 (TGNEQK) coordinates substrate. 2 residues coordinate Mg(2+): glutamate 44 and aspartate 73. Catalysis depends on aspartate 73, which acts as the Proton acceptor. Substrate-binding positions include threonine 74, 156 to 159 (FGYD), lysine 179, and 184 to 185 (HR).

It belongs to the HAM1 NTPase family. Homodimer. It depends on Mg(2+) as a cofactor.

It carries out the reaction XTP + H2O = XMP + diphosphate + H(+). The enzyme catalyses dITP + H2O = dIMP + diphosphate + H(+). The catalysed reaction is ITP + H2O = IMP + diphosphate + H(+). In terms of biological role, pyrophosphatase that catalyzes the hydrolysis of nucleoside triphosphates to their monophosphate derivatives, with a high preference for the non-canonical purine nucleotides XTP (xanthosine triphosphate), dITP (deoxyinosine triphosphate) and ITP. Seems to function as a house-cleaning enzyme that removes non-canonical purine nucleotides from the nucleotide pool, thus preventing their incorporation into DNA/RNA and avoiding chromosomal lesions. In Elusimicrobium minutum (strain Pei191), this protein is dITP/XTP pyrophosphatase.